The following is a 307-amino-acid chain: Agmatinase (307 aa).

Residues H128, D151, H153, D155, D232, and D234 each coordinate Mn(2+).

Belongs to the arginase family. Agmatinase subfamily. It depends on Mn(2+) as a cofactor.

The catalysed reaction is agmatine + H2O = urea + putrescine. It functions in the pathway amine and polyamine biosynthesis; putrescine biosynthesis via agmatine pathway; putrescine from agmatine: step 1/1. Functionally, catalyzes the formation of putrescine from agmatine. The polypeptide is Agmatinase (Photorhabdus laumondii subsp. laumondii (strain DSM 15139 / CIP 105565 / TT01) (Photorhabdus luminescens subsp. laumondii)).